The primary structure comprises 109 residues: MEMDLNNRLTEDETLEQAYDIFLELAADNLDPADIILFNLQFEERGGAELFDPSEEWQEHVDFDLNPDFFAEVVIGLADTEDGEINNIFARVLLCREKNHKLCHILWRE.

Belongs to the putative dsDNA mimic protein family.

Its function is as follows. May act as a double-stranded DNA (dsDNA) mimic. Probably regulates the activity of a dsDNA-binding protein. The protein is Putative double-stranded DNA mimic protein YciU of Salmonella arizonae (strain ATCC BAA-731 / CDC346-86 / RSK2980).